A 499-amino-acid chain; its full sequence is Probable cytochrome P450 cyp-35D1 (499 aa).

Cys444 lines the heme pocket.

This sequence belongs to the cytochrome P450 family. Heme serves as cofactor. Expressed in hypodermis, intestine and vulva upon thiabendazole (TBZ) exposure.

Functionally, cytochromes P450 are a group of heme-thiolate monooxygenases. They oxidize a variety of structurally unrelated compounds, including steroids, fatty acids, and xenobiotics. Involved in the oxidative metabolism of thiabendazole (TBZ). Catalyzes the conversion of TBZ to its hydroxylated form. In Caenorhabditis elegans, this protein is Probable cytochrome P450 cyp-35D1.